Here is a 1198-residue protein sequence, read N- to C-terminus: Sterol 3-beta-glucosyltransferase (1198 aa).

A compositionally biased stretch (polar residues) spans 1–11; the sequence is MPITQIISASD. Disordered regions lie at residues 1–89 and 124–162; these read MPIT…DNAD and SQVDSEESDSSDSFQENIGQNEVKSKKENLKTKSHPEVP. The segment covering 35–51 has biased composition (basic residues); the sequence is RHHRLSRSLSKFKRWRG. Residues 52 to 67 are compositionally biased toward low complexity; it reads RSNSSLSMGSSEQQEL. Ser-76 is modified (phosphoserine). The segment covering 146–162 has biased composition (basic and acidic residues); sequence VKSKKENLKTKSHPEVP. Residues 187–236 form the GRAM 1 domain; the sequence is AKLRQRFCLDEQEPFLNDFPAWLLKDVLVQGHIFITTKHFLFFAYLPKNP. One can recognise a PH domain in the interval 238-336; that stretch reads SVKMSGNLNI…WVNALKKEQF (99 aa). Residues 427–465 are disordered; the sequence is KSSFGKETPATAEQKNNGEDSKYLNVPTSAVPSSENGKK. Residues 452–461 are compositionally biased toward polar residues; that stretch reads VPTSAVPSSE. In terms of domain architecture, GRAM 2 spans 570-636; that stretch reads ERFRYHFKFN…VDVETCYKEK (67 aa). Phosphoserine is present on Ser-693. The UDP-alpha-D-glucose site is built by Ser-749, Arg-750, Asp-752, Asn-1025, Asn-1053, Val-1054, His-1056, His-1069, Ser-1072, Gly-1073, Thr-1074, Asp-1093, and Gln-1094.

Belongs to the glycosyltransferase 28 family.

Its subcellular location is the cytoplasm. It localises to the membrane. It catalyses the reaction a sterol + UDP-alpha-D-glucose = a sterol 3-beta-D-glucoside + UDP + H(+). The catalysed reaction is ergosterol + UDP-alpha-D-glucose = ergosteryl 3-beta-D-glucoside + UDP + H(+). Its function is as follows. Sterol glycosyltransferase responsible for the glycosylation of ergosterol to form ergosterol-glucoside. Also shows activity in vitro on other sterols such as cholesterol, beta-sitosterol, stigmasterol and tomatidine. In contrasts to what is observed in Pichia pastoris and Aspergillus oryzae, is not involved in cytoplasm to vacuole transport (Cvt), pexophagy or nonselective autophagy in Saccharomyces cerevisiae. In Saccharomyces cerevisiae (strain YJM789) (Baker's yeast), this protein is Sterol 3-beta-glucosyltransferase.